Reading from the N-terminus, the 248-residue chain is ATP synthase subunit a, chloroplastic (248 aa).

A run of 5 helical transmembrane segments spans residues 38 to 58, 96 to 116, 135 to 155, 200 to 220, and 221 to 241; these read QVLI…TIAV, VPFI…GALL, INTT…AGLA, LVVA…VMFL, and GLFT…AYIG.

Belongs to the ATPase A chain family. F-type ATPases have 2 components, CF(1) - the catalytic core - and CF(0) - the membrane proton channel. CF(1) has five subunits: alpha(3), beta(3), gamma(1), delta(1), epsilon(1). CF(0) has four main subunits: a, b, b' and c.

It localises to the plastid. Its subcellular location is the chloroplast thylakoid membrane. In terms of biological role, key component of the proton channel; it plays a direct role in the translocation of protons across the membrane. The chain is ATP synthase subunit a, chloroplastic from Pinus koraiensis (Korean pine).